Consider the following 709-residue polypeptide: MLEEQLYLLACIFASRADTRNIKKLSTRLGSQSKYLEILCVLWPELDDPKNLLFLRELEEEVQSPEGEETTDEDVIVELLESDSSLIPLIESDTTTRSNRYHELQEFISKKLNNKTLENFEEWLRERILICNEMIPETPLLYSVLWETAKSKVLSTKFIGWVEGVLKPLDHLNKRLHLIFKINEWEKMPDSELFKIIFDGVEDMQGYIGIADVIEDELAPTLSYGKKWETFITEFFNKQQFSLKSDTNYQLFIKLYYSLEKGVKDNSEASRKLQSNVVDILFHNSENLFNLSSLTHKLDELWSILSGFPDEITIEEQKTITALEMKQFMEFFIKCSTKFSFKEIFAITQEEESAQLAHFSSLCHEEFNKANEISSFLQAMYETVLDISKDDKIFTRISMDEKLYSILEILLQMNEFAYIEAIIERFDYSNNTQIYELLVKFFWHFFNNASNGLRKEPEMKKASQTLQIIQKHMSQRAGTNLTKLEVLLEISDKLSHYSINLNKSHNGARDTAFKPSNILEYRDCPLDIISNLLELNPRLYKDLPTTKSLLFGIYDSLSINREGQTGKVEVDLMVLHIDYALVNLDFGTAYELGKQVFEICQEAGQHMMKALGDEHWLTFYQMGKFVDPNWVDNEIPTEIIVLQMSILGRLLEVCPLEEVEIVTSQWSTLELELSARDLVKDKYALDGQNDNKSKVGGIAREIFHNVTNF.

The protein belongs to the SEC39 family. As to quaternary structure, component of a peripheral membrane protein complex consisting of DSL1, SEC39/DSL3 and TIP20. Bound to a SNARE complex consisting of UFE1, USE1, SEC20 and SEC22 or YKT6 through direct interaction of TIP20 with SEC20. Interacts with TIP20 and DSL1.

It localises to the endoplasmic reticulum membrane. Functionally, required for protein transport between the Golgi and the endoplasmic reticulum. May contribute to tethering of coatomer-coated retrograde transport vesicles to the ER membrane through interaction with and stabilization of the SNARE complex. This is Protein transport protein SEC39 from Saccharomyces cerevisiae (strain ATCC 204508 / S288c) (Baker's yeast).